A 414-amino-acid chain; its full sequence is tRNA N6-adenosine threonylcarbamoyltransferase, mitochondrial (414 aa).

Residues 1–29 constitute a mitochondrion transit peptide; sequence MLILTKTAGVFFKPSKRKVYEFLRSFNFH. An N6-acetyllysine mark is found at Lys74 and Lys140. Positions 147 and 151 each coordinate a divalent metal cation. Substrate contacts are provided by residues 169–173 and Asp202; that span reads LISGG. Lys203 is modified (N6-acetyllysine). Substrate-binding residues include Gly222 and Glu226. An N6-acetyllysine mark is found at Lys230, Lys240, and Lys299. Substrate-binding positions include 329–330 and Thr357; that span reads SN. Asp358 is a binding site for a divalent metal cation.

The protein belongs to the KAE1 / TsaD family. As to quaternary structure, monomer. It depends on a divalent metal cation as a cofactor. Widely expressed, with maximum expression in pituitary gland, prostate, rectum and uterus.

Its subcellular location is the mitochondrion. It catalyses the reaction L-threonylcarbamoyladenylate + adenosine(37) in tRNA = N(6)-L-threonylcarbamoyladenosine(37) in tRNA + AMP + H(+). In terms of biological role, required for the formation of a threonylcarbamoyl group on adenosine at position 37 (t(6)A37) in mitochondrial tRNAs that read codons beginning with adenine. Probably involved in the transfer of the threonylcarbamoyl moiety of threonylcarbamoyl-AMP (TC-AMP) to the N6 group of A37. Involved in mitochondrial genome maintenance. The protein is tRNA N6-adenosine threonylcarbamoyltransferase, mitochondrial of Homo sapiens (Human).